The primary structure comprises 337 residues: Protein-arginine kinase (337 aa).

One can recognise a Phosphagen kinase C-terminal domain in the interval 8 to 239; the sequence is VVLSSRIRLA…KQIISSERRA (232 aa). Residues 11–15, histidine 76, arginine 110, 161–165, and 192–197 each bind ATP; these read SSRIR, RASVM, and RGIYGE. Residues 321–326 carry the RDXXRA motif of the pArg binding pocket involved in allosteric regulation motif; sequence RDVKRA.

Belongs to the ATP:guanido phosphotransferase family.

The enzyme catalyses L-arginyl-[protein] + ATP = N(omega)-phospho-L-arginyl-[protein] + ADP + H(+). Appears to be allosterically activated by the binding of pArg-containing polypeptides to the pArg-binding pocket localized in the C-terminal domain of McsB. Functionally, catalyzes the specific phosphorylation of arginine residues in proteins. The polypeptide is Protein-arginine kinase (Caldanaerobacter subterraneus subsp. tengcongensis (strain DSM 15242 / JCM 11007 / NBRC 100824 / MB4) (Thermoanaerobacter tengcongensis)).